Here is a 284-residue protein sequence, read N- to C-terminus: Protoheme IX farnesyltransferase (284 aa).

A run of 9 helical transmembrane segments spans residues 13-33 (VTVL…TGYP), 35-55 (LTVI…SFIL), 84-104 (FALL…TYFI), 106-126 (LLTA…YTIW), 134-154 (NIVI…AAMA), 163-183 (VMFL…AIFL), 205-225 (VNQI…FYFV), 229-249 (MGYL…GFAY), and 264-284 (FFFS…DSKI).

Belongs to the UbiA prenyltransferase family. Protoheme IX farnesyltransferase subfamily.

It localises to the cell inner membrane. The catalysed reaction is heme b + (2E,6E)-farnesyl diphosphate + H2O = Fe(II)-heme o + diphosphate. The protein operates within porphyrin-containing compound metabolism; heme O biosynthesis; heme O from protoheme: step 1/1. In terms of biological role, converts heme B (protoheme IX) to heme O by substitution of the vinyl group on carbon 2 of heme B porphyrin ring with a hydroxyethyl farnesyl side group. This chain is Protoheme IX farnesyltransferase, found in Leptospira biflexa serovar Patoc (strain Patoc 1 / Ames).